Reading from the N-terminus, the 645-residue chain is Zinc finger and SCAN domain-containing protein 2 (645 aa).

Disordered stretches follow at residues 1–25 (MMAAEIPRVTTPLSPLVQVPQEEDR), 37–75 (DDSWVQEAVLQEDGPESEPFPQSAGKGSPQEEVTRGPQG), and 193–230 (EMPEGESAQHSDGESDFERDAGIQRPQGHTPGKDHGEV). The region spanning 59–132 (SAGKGSPQEE…ALVEDLTQTL (74 aa)) is the SCAN box domain. Positions 199–214 (SAQHSDGESDFERDAG) are enriched in basic and acidic residues. C2H2-type zinc fingers lie at residues 253–275 (YECPQCGKTFSRKSHLITHERTH), 281–303 (YKCDECGKSFSDGSNFSRHQTTH), 309–331 (YKCRDCGKSFSRSANLITHQRIH), 337–359 (FQCAECGKSFSRSPNLIAHQRTH), 365–387 (YSCPECGKSFGNRSSLNTHQGIH), 393–415 (YECKECGESFSYNSNLIRHQRIH), 421–443 (YKCTDCGQRFSQSSALITHRRTH), 449–471 (YQCSECGKNFSRSSNLATHRRTH), 477–499 (YKCGVCGKSFSQSSSLIAHQGMH), 505–527 (YECLTCGESFSWSSNLLKHQRIH), 533–555 (YKCSECGKCFSQRSQLVVHQQTH), 561–583 (YKCLMCGKSFSRGSILVMHQRAH), 589–611 (YRCPECGKGFSWNSVLIIHQRIH), and 617–639 (YKCPECGKGFSNSSNFITHQRTH).

The protein belongs to the krueppel C2H2-type zinc-finger protein family.

Its subcellular location is the nucleus. Its function is as follows. May be involved in transcriptional regulation during the post-meiotic stages of spermatogenesis. The sequence is that of Zinc finger and SCAN domain-containing protein 2 (ZSCAN2) from Pongo abelii (Sumatran orangutan).